The primary structure comprises 309 residues: Ornithine carbamoyltransferase (309 aa).

Carbamoyl phosphate contacts are provided by residues 51 to 54 (STRT), Gln-78, Arg-102, and 129 to 132 (HPCQ). L-ornithine contacts are provided by residues Asn-161, Asp-225, and 229 to 230 (SM). Residues 265 to 266 (CL) and Arg-293 contribute to the carbamoyl phosphate site.

This sequence belongs to the aspartate/ornithine carbamoyltransferase superfamily. OTCase family.

Its subcellular location is the cytoplasm. It catalyses the reaction carbamoyl phosphate + L-ornithine = L-citrulline + phosphate + H(+). The protein operates within amino-acid biosynthesis; L-arginine biosynthesis; L-arginine from L-ornithine and carbamoyl phosphate: step 1/3. In terms of biological role, reversibly catalyzes the transfer of the carbamoyl group from carbamoyl phosphate (CP) to the N(epsilon) atom of ornithine (ORN) to produce L-citrulline. The chain is Ornithine carbamoyltransferase from Mycolicibacterium paratuberculosis (strain ATCC BAA-968 / K-10) (Mycobacterium paratuberculosis).